The following is a 224-amino-acid chain: Ribonuclease 3 (224 aa).

An RNase III domain is found at isoleucine 4–glycine 127. Residue glutamate 40 coordinates Mg(2+). Residue aspartate 44 is part of the active site. 2 residues coordinate Mg(2+): aspartate 113 and glutamate 116. Residue glutamate 116 is part of the active site. The 70-residue stretch at aspartate 154–alanine 223 folds into the DRBM domain.

Belongs to the ribonuclease III family. As to quaternary structure, homodimer. The cofactor is Mg(2+).

Its subcellular location is the cytoplasm. The catalysed reaction is Endonucleolytic cleavage to 5'-phosphomonoester.. Functionally, digests double-stranded RNA. Involved in the processing of primary rRNA transcript to yield the immediate precursors to the large and small rRNAs (23S and 16S). Processes some mRNAs, and tRNAs when they are encoded in the rRNA operon. Processes pre-crRNA and tracrRNA of type II CRISPR loci if present in the organism. This Campylobacter jejuni (strain RM1221) protein is Ribonuclease 3.